The chain runs to 166 residues: UPF0304 protein VS_1049 (166 aa).

It belongs to the UPF0304 family.

This is UPF0304 protein VS_1049 from Vibrio atlanticus (strain LGP32) (Vibrio splendidus (strain Mel32)).